Here is a 423-residue protein sequence, read N- to C-terminus: Gamma-glutamyl phosphate reductase (423 aa).

The protein belongs to the gamma-glutamyl phosphate reductase family.

It localises to the cytoplasm. The catalysed reaction is L-glutamate 5-semialdehyde + phosphate + NADP(+) = L-glutamyl 5-phosphate + NADPH + H(+). Its pathway is amino-acid biosynthesis; L-proline biosynthesis; L-glutamate 5-semialdehyde from L-glutamate: step 2/2. Catalyzes the NADPH-dependent reduction of L-glutamate 5-phosphate into L-glutamate 5-semialdehyde and phosphate. The product spontaneously undergoes cyclization to form 1-pyrroline-5-carboxylate. This chain is Gamma-glutamyl phosphate reductase, found in Burkholderia ambifaria (strain ATCC BAA-244 / DSM 16087 / CCUG 44356 / LMG 19182 / AMMD) (Burkholderia cepacia (strain AMMD)).